Here is a 2179-residue protein sequence, read N- to C-terminus: Genome polyprotein (2179 aa).

The interval 1-20 (MGAQVSTQKSGSHENQNILT) is disordered. The N-myristoyl glycine; by host moiety is linked to residue glycine 2. Over 2 to 1491 (GAQVSTQKSG…AMNQASMIIN (1490 aa)) the chain is Cytoplasmic. Residues 564 to 584 (ALTEGLGDELEEVIVEKTKQT) are amphipathic alpha-helix. Catalysis depends on for protease 2A activity residues histidine 876 and aspartate 894. The Zn(2+) site is built by cysteine 911 and cysteine 913. The active-site For protease 2A activity is cysteine 965. Zn(2+)-binding residues include cysteine 971 and histidine 973. The tract at residues 1101 to 1173 (NDGWFRKFND…HISNPTQEKR (73 aa)) is membrane-binding. The interval 1101–1239 (NDGWFRKFND…TPGSGKSLTT (139 aa)) is oligomerization. The segment at 1122 to 1126 (ANKIS) is RNA-binding. The 157-residue stretch at 1205–1361 (KNKMVNYMQF…TTYTKNGKLN (157 aa)) folds into the SF3 helicase domain. Positions 1369, 1372, 1381, and 1386 each coordinate Zn(2+). The C4-type zinc finger occupies 1369 to 1386 (CKDCHQPSNFKKCCPLVC). An RNA-binding region spans residues 1413-1420 (DFKSKMQI). Residues 1424-1429 (LETLFQ) form an oligomerization region. An intramembrane segment occupies 1492–1507 (TILMFVSTLGIVYVIY). Residues 1508–2179 (KLFAQTQGPY…VLRRRWLDLF (672 aa)) are Cytoplasmic-facing. Position 1517 is an O-(5'-phospho-RNA)-tyrosine (tyrosine 1517). The Peptidase C3 domain occupies 1538-1715 (GPNTEFALSL…FSAQLKKQYF (178 aa)). Residues histidine 1577, glutamate 1608, and cysteine 1683 each act as for protease 3C activity in the active site. Residues 1946-2060 (GHLMAFDYSN…SYPYELDPQV (115 aa)) form the RdRp catalytic domain. Mg(2+) contacts are provided by aspartate 1952 and aspartate 2046.

It belongs to the picornaviruses polyprotein family. As to quaternary structure, interacts with capsid protein VP1 and capsid protein VP3 to form heterotrimeric protomers. In terms of assembly, interacts with capsid protein VP0, and capsid protein VP3 to form heterotrimeric protomers. Five protomers subsequently associate to form pentamers which serve as building blocks for the capsid. Interacts with capsid protein VP2, capsid protein VP3 and capsid protein VP4 following cleavage of capsid protein VP0. Interacts with host ICAM1. Interacts with capsid protein VP1 and capsid protein VP3 in the mature capsid. As to quaternary structure, interacts with capsid protein VP0 and capsid protein VP1 to form heterotrimeric protomers. Five protomers subsequently associate to form pentamers which serve as building blocks for the capsid. Interacts with capsid protein VP4 in the mature capsid. Interacts with protein 2C; this interaction may be important for virion morphogenesis. In terms of assembly, interacts with capsid protein VP1 and capsid protein VP3. Homodimer. As to quaternary structure, homohexamer; forms a hexameric ring structure with 6-fold symmetry characteristic of AAA+ ATPases. Interacts (via N-terminus) with host RTN3 (via reticulon domain); this interaction is important for viral replication. Interacts with capsid protein VP3; this interaction may be important for virion morphogenesis. In terms of assembly, interacts with protein 3CD. Homodimer. Interacts with host GBF1. Interacts (via GOLD domain) with host ACBD3 (via GOLD domain); this interaction allows the formation of a viral protein 3A/ACBD3 heterotetramer with a 2:2 stoichiometry, which will stimulate the recruitment of host PI4KB in order to synthesize PI4P at the viral RNA replication sites. As to quaternary structure, interacts with RNA-directed RNA polymerase. In terms of assembly, interacts with protein 3AB and with RNA-directed RNA polymerase. Interacts with Viral protein genome-linked and with protein 3CD. The cofactor is Mg(2+). Post-translationally, specific enzymatic cleavages in vivo by the viral proteases yield processing intermediates and the mature proteins. In terms of processing, myristoylation is required for the formation of pentamers during virus assembly. Further assembly of 12 pentamers and a molecule of genomic RNA generates the provirion. During virion maturation, immature virions are rendered infectious following cleavage of VP0 into VP4 and VP2. This maturation seems to be an autocatalytic event triggered by the presence of RNA in the capsid and it is followed by a conformational change infectious virion. Post-translationally, myristoylation is required during RNA encapsidation and formation of the mature virus particle. In terms of processing, VPg is uridylylated by the polymerase into VPg-pUpU. This acts as a nucleotide-peptide primer for the genomic RNA replication.

The protein resides in the virion. Its subcellular location is the host cytoplasm. It localises to the host cytoplasmic vesicle membrane. It is found in the host nucleus. It catalyses the reaction a ribonucleoside 5'-triphosphate + H2O = a ribonucleoside 5'-diphosphate + phosphate + H(+). The catalysed reaction is Selective cleavage of Tyr-|-Gly bond in the picornavirus polyprotein.. It carries out the reaction RNA(n) + a ribonucleoside 5'-triphosphate = RNA(n+1) + diphosphate. The enzyme catalyses Selective cleavage of Gln-|-Gly bond in the poliovirus polyprotein. In other picornavirus reactions Glu may be substituted for Gln, and Ser or Thr for Gly.. Its activity is regulated as follows. Replication or transcription is subject to high level of random mutations by the nucleotide analog ribavirin. Functionally, forms an icosahedral capsid of pseudo T=3 symmetry with capsid proteins VP2 and VP3. The capsid is 300 Angstroms in diameter, composed of 60 copies of each capsid protein and enclosing the viral positive strand RNA genome. Capsid protein VP1 mainly forms the vertices of the capsid. Capsid protein VP1 interacts with host ICAM1 to provide virion attachment to target host cells. This attachment induces virion internalization. Tyrosine kinases are probably involved in the entry process. After binding to its receptor, the capsid undergoes conformational changes. Capsid protein VP1 N-terminus (that contains an amphipathic alpha-helix) and capsid protein VP4 are externalized. Together, they shape a pore in the host membrane through which viral genome is translocated to host cell cytoplasm. After genome has been released, the channel shrinks. In terms of biological role, forms an icosahedral capsid of pseudo T=3 symmetry with capsid proteins VP2 and VP3. The capsid is 300 Angstroms in diameter, composed of 60 copies of each capsid protein and enclosing the viral positive strand RNA genome. Lies on the inner surface of the capsid shell. After binding to the host receptor, the capsid undergoes conformational changes. Capsid protein VP4 is released, Capsid protein VP1 N-terminus is externalized, and together, they shape a pore in the host membrane through which the viral genome is translocated into the host cell cytoplasm. Its function is as follows. Component of immature procapsids, which is cleaved into capsid proteins VP4 and VP2 after maturation. Allows the capsid to remain inactive before the maturation step. Functionally, cysteine protease that cleaves viral polyprotein and specific host proteins. It is responsible for the autocatalytic cleavage between the P1 and P2 regions, which is the first cleavage occurring in the polyprotein. Also cleaves the host translation initiation factor EIF4G1, in order to shut down the capped cellular mRNA translation. Inhibits the host nucleus-cytoplasm protein and RNA trafficking by cleaving host members of the nuclear pores including NUP62 and NUP153. Counteracts stress granule formation probably by antagonizing its assembly or promoting its dissassembly. In terms of biological role, plays an essential role in the virus replication cycle by acting as a viroporin. Creates a pore in the host endoplasmic reticulum and as a consequence releases Ca2+ in the cytoplasm of infected cell. In turn, high levels of cytoplasmic calcium may trigger membrane trafficking and transport of viral ER-associated proteins to viroplasms, sites of viral genome replication. Induces and associates with structural rearrangements of intracellular membranes. Displays RNA-binding, nucleotide binding and NTPase activities. May play a role in virion morphogenesis and viral RNA encapsidation by interacting with the capsid protein VP3. Its function is as follows. Localizes the viral replication complex to the surface of membranous vesicles. Together with protein 3CD binds the Cis-Active RNA Element (CRE) which is involved in RNA synthesis initiation. Acts as a cofactor to stimulate the activity of 3D polymerase, maybe through a nucleid acid chaperone activity. Functionally, localizes the viral replication complex to the surface of membranous vesicles. It inhibits host cell endoplasmic reticulum-to-Golgi apparatus transport and causes the disassembly of the Golgi complex, possibly through GBF1 interaction. This would result in depletion of MHC, trail receptors and IFN receptors at the host cell surface. Plays an essential role in viral RNA replication by recruiting ACBD3 and PI4KB at the viral replication sites, thereby allowing the formation of the rearranged membranous structures where viral replication takes place. In terms of biological role, acts as a primer for viral RNA replication and remains covalently bound to viral genomic RNA. VPg is uridylylated prior to priming replication into VPg-pUpU. The oriI viral genomic sequence may act as a template for this. The VPg-pUpU is then used as primer on the genomic RNA poly(A) by the RNA-dependent RNA polymerase to replicate the viral genome. During genome replication, the VPg-RNA linkage is removed by the host TDP2, thereby accelerating replication. During the late stage of the replication cycle, host TDP2 is excluded from sites of viral RNA synthesis and encapsidation, allowing for the generation of progeny virions. Involved in the viral replication complex and viral polypeptide maturation. It exhibits protease activity with a specificity and catalytic efficiency that is different from protease 3C. Protein 3CD lacks polymerase activity. Protein 3CD binds to the 5'UTR of the viral genome. Its function is as follows. Major viral protease that mediates proteolytic processing of the polyprotein. Cleaves host EIF5B, contributing to host translation shutoff. Cleaves also host PABPC1, contributing to host translation shutoff. Cleaves host NLRP1, triggers host N-glycine-mediated degradation of the autoinhibitory NLRP1 N-terminal fragment. Functionally, replicates the viral genomic RNA on the surface of intracellular membranes. May form linear arrays of subunits that propagate along a strong head-to-tail interaction called interface-I. Covalently attaches UMP to a tyrosine of VPg, which is used to prime RNA synthesis. The positive stranded RNA genome is first replicated at virus induced membranous vesicles, creating a dsRNA genomic replication form. This dsRNA is then used as template to synthesize positive stranded RNA genomes. ss(+)RNA genomes are either translated, replicated or encapsidated. This is Genome polyprotein from Homo sapiens (Human).